A 384-amino-acid polypeptide reads, in one-letter code: Histidinol-phosphate aminotransferase 2 (384 aa).

The residue at position 236 (lysine 236) is an N6-(pyridoxal phosphate)lysine.

It belongs to the class-II pyridoxal-phosphate-dependent aminotransferase family. Histidinol-phosphate aminotransferase subfamily. As to quaternary structure, homodimer. It depends on pyridoxal 5'-phosphate as a cofactor.

It carries out the reaction L-histidinol phosphate + 2-oxoglutarate = 3-(imidazol-4-yl)-2-oxopropyl phosphate + L-glutamate. The protein operates within amino-acid biosynthesis; L-histidine biosynthesis; L-histidine from 5-phospho-alpha-D-ribose 1-diphosphate: step 7/9. The sequence is that of Histidinol-phosphate aminotransferase 2 (hisC2) from Nostoc sp. (strain PCC 7120 / SAG 25.82 / UTEX 2576).